The following is a 131-amino-acid chain: Large-conductance mechanosensitive channel (131 aa).

The next 3 helical transmembrane spans lie at Phe8–Gly28, Ile30–Ile50, and Gly67–Val87.

This sequence belongs to the MscL family. In terms of assembly, homopentamer.

It localises to the cell membrane. In terms of biological role, channel that opens in response to stretch forces in the membrane lipid bilayer. May participate in the regulation of osmotic pressure changes within the cell. In Geobacillus kaustophilus (strain HTA426), this protein is Large-conductance mechanosensitive channel.